The chain runs to 119 residues: Phosphoribosyl-AMP cyclohydrolase (119 aa).

Asp-77 is a binding site for Mg(2+). Cys-78 lines the Zn(2+) pocket. Residues Asp-79 and Asp-81 each coordinate Mg(2+). Residues Cys-94 and Cys-101 each coordinate Zn(2+).

This sequence belongs to the PRA-CH family. Homodimer. The cofactor is Mg(2+). Zn(2+) is required as a cofactor.

The protein localises to the cytoplasm. The enzyme catalyses 1-(5-phospho-beta-D-ribosyl)-5'-AMP + H2O = 1-(5-phospho-beta-D-ribosyl)-5-[(5-phospho-beta-D-ribosylamino)methylideneamino]imidazole-4-carboxamide. It participates in amino-acid biosynthesis; L-histidine biosynthesis; L-histidine from 5-phospho-alpha-D-ribose 1-diphosphate: step 3/9. Functionally, catalyzes the hydrolysis of the adenine ring of phosphoribosyl-AMP. In Ruegeria pomeroyi (strain ATCC 700808 / DSM 15171 / DSS-3) (Silicibacter pomeroyi), this protein is Phosphoribosyl-AMP cyclohydrolase.